Here is a 209-residue protein sequence, read N- to C-terminus: Uracil phosphoribosyltransferase (209 aa).

5-phospho-alpha-D-ribose 1-diphosphate contacts are provided by residues R79, R104, and 131–139; that span reads DPMLATGGT. Residues I194 and 199 to 201 contribute to the uracil site; that span reads GDA. D200 contributes to the 5-phospho-alpha-D-ribose 1-diphosphate binding site.

It belongs to the UPRTase family. The cofactor is Mg(2+).

The catalysed reaction is UMP + diphosphate = 5-phospho-alpha-D-ribose 1-diphosphate + uracil. Its pathway is pyrimidine metabolism; UMP biosynthesis via salvage pathway; UMP from uracil: step 1/1. Allosterically activated by GTP. Catalyzes the conversion of uracil and 5-phospho-alpha-D-ribose 1-diphosphate (PRPP) to UMP and diphosphate. This chain is Uracil phosphoribosyltransferase, found in Pseudoalteromonas atlantica (strain T6c / ATCC BAA-1087).